Here is a 267-residue protein sequence, read N- to C-terminus: MTEYNWNERHIITFPEETLALATKDLHVYYGAKEAIKGIDMQFEKYKITALIGPSGCGKSTYLRSLNRMNDTIDIARVTGEILYQGIDVNRKDMNVYEIRKHLGMVFQRPNPFAKSIYKNITFAHERAGVKDKKVLDEIVETSLKQAALWDQVKDDLHKSAFTLSGGQQQRLCIARAISVKPDILLMDEPASALDPIATMQLEETMFELKKNYTIIIVTHNMQQAARASDYTAFFYLGNLIEYDKTRNIFQNAQCQSTNDYVSGHFG.

The ABC transporter domain maps to 21–262 (LATKDLHVYY…AQCQSTNDYV (242 aa)). 53-60 (GPSGCGKS) contributes to the ATP binding site.

It belongs to the ABC transporter superfamily. Phosphate importer (TC 3.A.1.7) family. As to quaternary structure, the complex is composed of two ATP-binding proteins (PstB), two transmembrane proteins (PstC and PstA) and a solute-binding protein (PstS).

It localises to the cell membrane. The catalysed reaction is phosphate(out) + ATP + H2O = ADP + 2 phosphate(in) + H(+). In terms of biological role, part of the ABC transporter complex PstSACB involved in phosphate import. Responsible for energy coupling to the transport system. This Streptococcus pyogenes serotype M18 (strain MGAS8232) protein is Phosphate import ATP-binding protein PstB 2.